Reading from the N-terminus, the 159-residue chain is UPF0303 protein Ping_1243 (159 aa).

The protein belongs to the UPF0303 family.

This is UPF0303 protein Ping_1243 from Psychromonas ingrahamii (strain DSM 17664 / CCUG 51855 / 37).